A 458-amino-acid polypeptide reads, in one-letter code: Enolase (458 aa).

Glutamine 177 is a binding site for (2R)-2-phosphoglycerate. Residue glutamate 219 is the Proton donor of the active site. Residues aspartate 256, glutamate 310, and aspartate 337 each coordinate Mg(2+). 4 residues coordinate (2R)-2-phosphoglycerate: lysine 362, arginine 391, serine 392, and lysine 413. Lysine 362 functions as the Proton acceptor in the catalytic mechanism.

It belongs to the enolase family. Mg(2+) is required as a cofactor.

The protein localises to the cytoplasm. The protein resides in the secreted. Its subcellular location is the cell surface. The enzyme catalyses (2R)-2-phosphoglycerate = phosphoenolpyruvate + H2O. It participates in carbohydrate degradation; glycolysis; pyruvate from D-glyceraldehyde 3-phosphate: step 4/5. In terms of biological role, catalyzes the reversible conversion of 2-phosphoglycerate (2-PG) into phosphoenolpyruvate (PEP). It is essential for the degradation of carbohydrates via glycolysis. This Mycoplasma genitalium (strain ATCC 33530 / DSM 19775 / NCTC 10195 / G37) (Mycoplasmoides genitalium) protein is Enolase.